Consider the following 1393-residue polypeptide: DNA-directed RNA polymerase subunit beta (1393 aa).

This sequence belongs to the RNA polymerase beta chain family. As to quaternary structure, the RNAP catalytic core consists of 2 alpha, 1 beta, 1 beta' and 1 omega subunit. When a sigma factor is associated with the core the holoenzyme is formed, which can initiate transcription.

The enzyme catalyses RNA(n) + a ribonucleoside 5'-triphosphate = RNA(n+1) + diphosphate. DNA-dependent RNA polymerase catalyzes the transcription of DNA into RNA using the four ribonucleoside triphosphates as substrates. This Rhodospirillum rubrum (strain ATCC 11170 / ATH 1.1.1 / DSM 467 / LMG 4362 / NCIMB 8255 / S1) protein is DNA-directed RNA polymerase subunit beta.